Here is a 933-residue protein sequence, read N- to C-terminus: Bromodomain testis-specific protein (933 aa).

Positions Met-1 to Ile-21 are disordered. Residues Arg-28–Met-134 form the Bromo 1 domain. Residues Lys-214–Pro-225 carry the Nuclear localization signal motif. The segment at Glu-235–Val-263 is disordered. Positions Asn-278–Ile-385 constitute a Bromo 2 domain. Disordered stretches follow at residues Arg-398–Ala-425, Lys-576–Ser-610, and Gly-627–Thr-662. A compositionally biased stretch (low complexity) spans Glu-404–Ser-418. Residues Glu-423–Thr-448 adopt a coiled-coil conformation. Residues Val-495 to Pro-577 enclose the NET domain. Basic and acidic residues predominate over residues Lys-584–Asp-603. Positions Ser-630–Ser-660 are enriched in low complexity. The stretch at Ala-829 to Asp-917 forms a coiled coil.

Belongs to the BET family.

The protein localises to the nucleus. Testis-specific chromatin protein that specifically binds histone H4 acetylated at 'Lys-5' and 'Lys-8' (H4K5ac and H4K8ac, respectively) and plays a key role in spermatogenesis. Required in late pachytene spermatocytes: plays a role in meiotic and post-meiotic cells by binding to acetylated histones at the promoter of specific meiotic and post-meiotic genes, facilitating their activation at the appropriate time. In the post-meiotic phase of spermatogenesis, binds to hyperacetylated histones and participates in their general removal from DNA. Also recognizes and binds a subset of butyrylated histones: able to bind histone H4 butyrylated at 'Lys-8' (H4K8ac), while it is not able to bind H4 butyrylated at 'Lys-5' (H4K5ac). The polypeptide is Bromodomain testis-specific protein (brdt) (Xenopus tropicalis (Western clawed frog)).